A 271-amino-acid polypeptide reads, in one-letter code: Cytosolic Fe-S cluster assembly factor NUBP2 (271 aa).

Position 1 is an N-acetylmethionine (Met-1). 22-29 contacts ATP; the sequence is GKGGVGKS. The [4Fe-4S] cluster site is built by Cys-196 and Cys-199.

This sequence belongs to the Mrp/NBP35 ATP-binding proteins family. NUBP2/CFD1 subfamily. In terms of assembly, heterotetramer of 2 NUBP1 and 2 NUBP2 chains. Interacts with KIFC1. Interacts with NUBP1. Requires [4Fe-4S] cluster as cofactor.

The protein localises to the nucleus. It is found in the cytoplasm. Its subcellular location is the cytoskeleton. The protein resides in the microtubule organizing center. It localises to the centrosome. The protein localises to the cilium axoneme. It is found in the centriole. In terms of biological role, component of the cytosolic iron-sulfur (Fe/S) protein assembly (CIA) machinery. Required for maturation of extramitochondrial Fe-S proteins. The NUBP1-NUBP2 heterotetramer forms a Fe-S scaffold complex, mediating the de novo assembly of an Fe-S cluster and its transfer to target apoproteins. Negatively regulates cilium formation and structure. This chain is Cytosolic Fe-S cluster assembly factor NUBP2, found in Bos taurus (Bovine).